The primary structure comprises 965 residues: Collagenase ColQ1 (965 aa).

The first 30 residues, 1–30, serve as a signal peptide directing secretion; it reads MNKKSKINKVMLSISTMALSLGALQAPASA. Positions 31-93 are excised as a propeptide; that stretch reads EEKVPYNVLK…KAAVKQVKES (63 aa). An activator domain region spans residues 94 to 366; that stretch reads YSMADLNKMN…AVEQITTNYN (273 aa). Positions 94-765 are S1 metalloprotease domain; the sequence is YSMADLNKMN…VFHGIAKDDG (672 aa). A catalytic subdomain region spans residues 376 to 645; it reads DLEKIRKEGK…MQQLIDNQDK (270 aa). His501 provides a ligand contact to Zn(2+). Glu502 is an active-site residue. Zn(2+)-binding residues include His505 and Glu533. Residues 653–765 form a helper subdomain region; the sequence is DDYLAEHAPK…VFHGIAKDDG (113 aa). Residues 769–850 enclose the PKD domain; sequence APTVNINGPY…ESKSETTVTV (82 aa). Positions 842 to 867 are disordered; it reads SKSETTVTVKDGSLTESEPNNRPEEA. Positions 845 to 859 are enriched in polar residues; that stretch reads ETTVTVKDGSLTESE. The tract at residues 853–965 is collagen-binding domain; that stretch reads GSLTESEPNN…GDGTYKLSVK (113 aa).

This sequence belongs to the peptidase M9B family. Collagenase subfamily. Requires Ca(2+) as cofactor. Zn(2+) serves as cofactor.

The protein localises to the secreted. It catalyses the reaction Digestion of native collagen in the triple helical region at Xaa-|-Gly bonds. With synthetic peptides, a preference is shown for Gly at P3 and P1', Pro and Ala at P2 and P2', and hydroxyproline, Ala or Arg at P3'.. Its activity is regulated as follows. Strongly inhibited by EDTA. Not inhibited by E-64 and PMSF, broad-spectrum cysteine and serine protease inhibitors. In terms of biological role, acts as a true collagenase, which is highly active and cleaves natively folded collagen. In vitro, can also cleave gelatin and the synthetic peptide FALGPA (furylacryloyl-Leu-Gly-Pro-Ala). Causes damage on dermal collagen (COL), resulting in gaps in the tissue, which might lead to an accelerated bacterial infiltration and penetration into deeper sites of the host. The sequence is that of Collagenase ColQ1 from Bacillus cereus (strain Q1).